The sequence spans 83 residues: Translational regulator CsrA (83 aa).

This sequence belongs to the CsrA/RsmA family. As to quaternary structure, homodimer; the beta-strands of each monomer intercalate to form a hydrophobic core, while the alpha-helices form wings that extend away from the core.

Its subcellular location is the cytoplasm. A translational regulator that binds mRNA to regulate translation initiation and/or mRNA stability. Usually binds in the 5'-UTR at or near the Shine-Dalgarno sequence preventing ribosome-binding, thus repressing translation. Its main target seems to be the major flagellin gene, while its function is anatagonized by FliW. The polypeptide is Translational regulator CsrA (Nocardioides sp. (strain ATCC BAA-499 / JS614)).